Here is a 312-residue protein sequence, read N- to C-terminus: Ankyrin repeat family A protein 2 (312 aa).

ANK repeat units lie at residues 147-179 (ANSLSAHQLAAQGEMLYLATRIEQENVINHTDE), 180-212 (EGFTPLMWAAAHGQIAVVEFLLQNGADPQLLGK), 213-245 (GRESALSLACSKGYTDIVKMLLDCGVDVNEYDW), 246-278 (NGGTPLLYAVHGNHVKCVKMLLENGADPTIETD), and 279-312 (SGYNSMDLAVALGYRGVQQAIESHLLKLLQNIRE).

Interacts (via ANK repeats) with CCDC8 (via PxLPxI/L motif); mediates the interaction with the 3M complex which is composed of CCDC8, CUL7 and OBSL1. Interacts (via ANK repeats) with HDAC4 (via PxLPxI/L motif). Interacts (via ANK repeats) with HDAC5 (via PxLPxI/L motif). Interacts (via ANK repeats) with LRP2/megalin (via PxLPxI/L motif). Interacts (via ANK repeats) with RFX7 (via PxLPxI/L motif). Interacts with AHRR. Interacts with NEK6.

It is found in the cytoplasm. The protein localises to the cytoskeleton. It localises to the membrane. May regulate the interaction between the 3M complex and the histone deacetylases HDAC4 and HDAC5. May also regulate LRP2/megalin. This Mus musculus (Mouse) protein is Ankyrin repeat family A protein 2 (Ankra2).